Consider the following 171-residue polypeptide: Urease accessory protein UreE (171 aa).

A disordered region spans residues 143-171 (SGGHQHHHGHDHDHGHHGHDHDHHHPDHE). Residues 152-171 (HDHDHGHHGHDHDHHHPDHE) are compositionally biased toward basic and acidic residues.

It belongs to the UreE family.

The protein localises to the cytoplasm. Functionally, involved in urease metallocenter assembly. Binds nickel. Probably functions as a nickel donor during metallocenter assembly. This Brucella abortus biovar 1 (strain 9-941) protein is Urease accessory protein UreE.